The primary structure comprises 505 residues: ATP synthase subunit alpha (505 aa).

169-176 (GDRQTGKT) contacts ATP.

Belongs to the ATPase alpha/beta chains family. As to quaternary structure, F-type ATPases have 2 components, CF(1) - the catalytic core - and CF(0) - the membrane proton channel. CF(1) has five subunits: alpha(3), beta(3), gamma(1), delta(1), epsilon(1). CF(0) has three main subunits: a(1), b(2) and c(9-12). The alpha and beta chains form an alternating ring which encloses part of the gamma chain. CF(1) is attached to CF(0) by a central stalk formed by the gamma and epsilon chains, while a peripheral stalk is formed by the delta and b chains.

It localises to the cell membrane. It carries out the reaction ATP + H2O + 4 H(+)(in) = ADP + phosphate + 5 H(+)(out). Its function is as follows. Produces ATP from ADP in the presence of a proton gradient across the membrane. The alpha chain is a regulatory subunit. In Clostridium acetobutylicum (strain ATCC 824 / DSM 792 / JCM 1419 / IAM 19013 / LMG 5710 / NBRC 13948 / NRRL B-527 / VKM B-1787 / 2291 / W), this protein is ATP synthase subunit alpha.